The following is a 326-amino-acid chain: Tetraacyldisaccharide 4'-kinase (326 aa).

Position 52 to 59 (52 to 59 (TLGGAGKT)) interacts with ATP.

The protein belongs to the LpxK family.

It carries out the reaction a lipid A disaccharide + ATP = a lipid IVA + ADP + H(+). It functions in the pathway glycolipid biosynthesis; lipid IV(A) biosynthesis; lipid IV(A) from (3R)-3-hydroxytetradecanoyl-[acyl-carrier-protein] and UDP-N-acetyl-alpha-D-glucosamine: step 6/6. Its function is as follows. Transfers the gamma-phosphate of ATP to the 4'-position of a tetraacyldisaccharide 1-phosphate intermediate (termed DS-1-P) to form tetraacyldisaccharide 1,4'-bis-phosphate (lipid IVA). This chain is Tetraacyldisaccharide 4'-kinase, found in Methylobacterium radiotolerans (strain ATCC 27329 / DSM 1819 / JCM 2831 / NBRC 15690 / NCIMB 10815 / 0-1).